Consider the following 250-residue polypeptide: 5'-nucleotidase SurE (250 aa).

Residues aspartate 8, aspartate 9, serine 40, and asparagine 95 each coordinate a divalent metal cation.

Belongs to the SurE nucleotidase family. A divalent metal cation serves as cofactor.

The protein localises to the cytoplasm. The enzyme catalyses a ribonucleoside 5'-phosphate + H2O = a ribonucleoside + phosphate. Functionally, nucleotidase that shows phosphatase activity on nucleoside 5'-monophosphates. This chain is 5'-nucleotidase SurE, found in Nitratidesulfovibrio vulgaris (strain DP4) (Desulfovibrio vulgaris).